Here is a 380-residue protein sequence, read N- to C-terminus: UDP-3-O-acylglucosamine N-acyltransferase (380 aa).

Residue H263 is the Proton acceptor of the active site.

The protein belongs to the transferase hexapeptide repeat family. LpxD subfamily. In terms of assembly, homotrimer.

It catalyses the reaction a UDP-3-O-[(3R)-3-hydroxyacyl]-alpha-D-glucosamine + a (3R)-hydroxyacyl-[ACP] = a UDP-2-N,3-O-bis[(3R)-3-hydroxyacyl]-alpha-D-glucosamine + holo-[ACP] + H(+). The protein operates within bacterial outer membrane biogenesis; LPS lipid A biosynthesis. Its function is as follows. Catalyzes the N-acylation of UDP-3-O-acylglucosamine using 3-hydroxyacyl-ACP as the acyl donor. Is involved in the biosynthesis of lipid A, a phosphorylated glycolipid that anchors the lipopolysaccharide to the outer membrane of the cell. This Rhodopirellula baltica (strain DSM 10527 / NCIMB 13988 / SH1) protein is UDP-3-O-acylglucosamine N-acyltransferase.